A 250-amino-acid chain; its full sequence is Triosephosphate isomerase (250 aa).

9–11 (NWK) is a binding site for substrate. Residue His96 is the Electrophile of the active site. The active-site Proton acceptor is Glu168. Substrate-binding positions include Gly174, Ser216, and 237 to 238 (GG).

This sequence belongs to the triosephosphate isomerase family. In terms of assembly, homodimer.

The protein localises to the cytoplasm. The enzyme catalyses D-glyceraldehyde 3-phosphate = dihydroxyacetone phosphate. Its pathway is carbohydrate biosynthesis; gluconeogenesis. It participates in carbohydrate degradation; glycolysis; D-glyceraldehyde 3-phosphate from glycerone phosphate: step 1/1. In terms of biological role, involved in the gluconeogenesis. Catalyzes stereospecifically the conversion of dihydroxyacetone phosphate (DHAP) to D-glyceraldehyde-3-phosphate (G3P). The chain is Triosephosphate isomerase from Leptospira interrogans serogroup Icterohaemorrhagiae serovar copenhageni (strain Fiocruz L1-130).